Reading from the N-terminus, the 424-residue chain is Glutamyl-tRNA reductase (424 aa).

Substrate contacts are provided by residues 53-56 (TCNR), serine 111, 116-118 (EPQ), and glutamine 122. Cysteine 54 acts as the Nucleophile in catalysis. 191–196 (GAGEMI) contributes to the NADP(+) binding site.

It belongs to the glutamyl-tRNA reductase family. Homodimer.

It carries out the reaction (S)-4-amino-5-oxopentanoate + tRNA(Glu) + NADP(+) = L-glutamyl-tRNA(Glu) + NADPH + H(+). It participates in porphyrin-containing compound metabolism; protoporphyrin-IX biosynthesis; 5-aminolevulinate from L-glutamyl-tRNA(Glu): step 1/2. Its function is as follows. Catalyzes the NADPH-dependent reduction of glutamyl-tRNA(Glu) to glutamate 1-semialdehyde (GSA). The chain is Glutamyl-tRNA reductase from Bordetella avium (strain 197N).